The primary structure comprises 165 residues: Protein SprT (165 aa).

A SprT-like domain is found at 19–163 (REKLAQANLK…RCVKCGEPLV (145 aa)). Residue histidine 78 coordinates Zn(2+). The active site involves glutamate 79. Histidine 82 is a Zn(2+) binding site.

The protein belongs to the SprT family. Zn(2+) is required as a cofactor.

It localises to the cytoplasm. The polypeptide is Protein SprT (Enterobacter sp. (strain 638)).